The following is a 413-amino-acid chain: Queuine tRNA-ribosyltransferase accessory subunit 2 (413 aa).

A disordered region spans residues 298-321; the sequence is LEKSETSGAERNGDVGAESEEPDA. The Zn(2+) site is built by Cys349, Cys351, Cys354, and His380.

The protein belongs to the queuine tRNA-ribosyltransferase family. QTRT2 subfamily. In terms of assembly, heterodimer of a catalytic subunit qtrt1 and an accessory subunit qtrt2. Requires Zn(2+) as cofactor.

The protein resides in the cytoplasm. Its subcellular location is the mitochondrion outer membrane. Functionally, non-catalytic subunit of the queuine tRNA-ribosyltransferase (TGT) that catalyzes the base-exchange of a guanine (G) residue with queuine (Q) at position 34 (anticodon wobble position) in tRNAs with GU(N) anticodons (tRNA-Asp, -Asn, -His and -Tyr), resulting in the hypermodified nucleoside queuosine (7-(((4,5-cis-dihydroxy-2-cyclopenten-1-yl)amino)methyl)-7-deazaguanosine). In Xenopus tropicalis (Western clawed frog), this protein is Queuine tRNA-ribosyltransferase accessory subunit 2.